Reading from the N-terminus, the 1765-residue chain is RANBP2-like and GRIP domain-containing protein 5/6 (1765 aa).

Threonine 19 is subject to Phosphothreonine. At serine 21 the chain carries Phosphoserine. 3 TPR repeats span residues 26–59, 60–93, and 648–681; these read SMKGFYFAKLYYEAKEYDLAKKYICTYINVQERD, PKAHRFLGLLYELEENTEKAVECYRRSVELNPTQ, and EDAHITFAMLDAVNGNIEDAVTAFESIKSVVSYW. 2 disordered regions span residues 760 to 804 and 924 to 945; these read GPLY…PRWT and FGISEPGNQEKKREKPLENDTG. Low complexity predominate over residues 778–797; the sequence is STPSPTKYSLSPSKSYKYSP. Residues 931-941 are compositionally biased toward basic and acidic residues; that stretch reads NQEKKREKPLE. In terms of domain architecture, RanBD1 1 spans 1036 to 1172; sequence HFEPVVQMPE…FEECQRLLLD (137 aa). Disordered stretches follow at residues 1214–1247 and 1306–1330; these read KVTEEENKGSGTGAAGASDTTIKPNAENTGPTLE and AKLNQSGTSVGTDEESVVTQEEERD. Positions 1235–1244 are enriched in polar residues; that stretch reads IKPNAENTGP. The segment covering 1317–1329 has biased composition (acidic residues); it reads TDEESVVTQEEER. The 137-residue stretch at 1333–1469 folds into the RanBD1 2 domain; that stretch reads YFEPVVPLPD…FDEAKTAQEK (137 aa). Residues 1580 to 1593 show a composition bias toward polar residues; that stretch reads NNSETSSVAQSGSE. A disordered region spans residues 1580-1621; sequence NNSETSSVAQSGSESKVEPKKCELSKNSDIEQSSDSKVKNLS. The segment covering 1594-1617 has biased composition (basic and acidic residues); the sequence is SKVEPKKCELSKNSDIEQSSDSKV. The GRIP domain maps to 1702–1752; sequence REKSAANLEYLKNVLLQFIFLKPGSERERLLPVINTMLQLSPEEKGKLAAV.

Expressed in testis.

The protein resides in the cytoplasm. In Homo sapiens (Human), this protein is RANBP2-like and GRIP domain-containing protein 5/6 (RGPD5).